Consider the following 152-residue polypeptide: Superoxide dismutase [Cu-Zn] (152 aa).

Residues His-45, His-47, and His-62 each coordinate Cu cation. Cys-56 and Cys-145 are disulfide-bonded. His-62, His-70, His-79, and Asp-82 together coordinate Zn(2+). Residue His-119 coordinates Cu cation.

It belongs to the Cu-Zn superoxide dismutase family. As to quaternary structure, homodimer. Cu cation serves as cofactor. The cofactor is Zn(2+).

The protein resides in the cytoplasm. It catalyses the reaction 2 superoxide + 2 H(+) = H2O2 + O2. Functionally, destroys radicals which are normally produced within the cells and which are toxic to biological systems. The chain is Superoxide dismutase [Cu-Zn] (SODCC) from Spinacia oleracea (Spinach).